The primary structure comprises 758 residues: Zinc finger protein VAR3, chloroplastic (758 aa).

The 3 X approximate repeat stretch occupies residues 122-502 (FPGFPDELLR…PKEETQIGLI (381 aa)). 2 RanBP2-type zinc fingers span residues 276–305 (KRGD…ARPK) and 308–338 (LTGS…KRPR). Residues 368–415 (RWLSKVAQGGSDANSVDTDEDFPEIMPLRKGVNRYVVSTRKPPLERRL) form repeat 1. Disordered stretches follow at residues 410 to 470 (PLER…RFES), 512 to 545 (GGNQ…SEEP), 572 to 606 (EKMP…DSDF), 629 to 654 (TLPA…INKS), and 727 to 758 (KRKT…KGDK). 3 stretches are compositionally biased toward basic and acidic residues: residues 457-469 (RSDD…RRFE), 519-545 (QEDK…SEEP), and 572-581 (EKMPMRKGEN). The stretch at 547-596 (RWFKRVTELHNVSDLESAIPQEISPEKMPMRKGENRFVVSRKKDRSLTSP) is repeat 2. Repeat 3 spans residues 688-736 (RWFKRVAEIKNISELSEIPDEDFPSIMPMRKGVNRFVVSKRKTPLERRL).

In terms of assembly, interacts in vitro with the chloroplast-located protein CCD4/NCED4. Homodimer. Interacts with ORRM1. Interacts with PCMP-H51/CRR28 and PCMP-H12/OTP82. Interacts with ORRM6. As to expression, weakly expressed in leaves and roots.

Its subcellular location is the plastid. It localises to the chloroplast. Its function is as follows. Probable component of some protein complex required for chloroplast and palisade cell development. Involved in C-to-U editing of chloroplastic RNA. Controls a large number of chloroplastic editing sites. Binds the editing recognition trans-factors PCMP-H51/CRR28 and PCMP-H12/OTP82. This Arabidopsis thaliana (Mouse-ear cress) protein is Zinc finger protein VAR3, chloroplastic.